The chain runs to 518 residues: Membrane-bound lytic murein transglycosylase F (518 aa).

Positions 1–21 (MKKLKINYLFIGILALLLAVA) are cleaved as a signal peptide. Residues 22–269 (LWPSIPWFGK…RIEEKYLGHG (248 aa)) are non-LT domain. An LT domain region spans residues 270-518 (DDFDYVDTRT…SRKGSEEKQN (249 aa)). Residue Glu314 is part of the active site.

This sequence in the N-terminal section; belongs to the bacterial solute-binding protein 3 family. In the C-terminal section; belongs to the transglycosylase Slt family.

It is found in the cell outer membrane. The enzyme catalyses Exolytic cleavage of the (1-&gt;4)-beta-glycosidic linkage between N-acetylmuramic acid (MurNAc) and N-acetylglucosamine (GlcNAc) residues in peptidoglycan, from either the reducing or the non-reducing ends of the peptidoglycan chains, with concomitant formation of a 1,6-anhydrobond in the MurNAc residue.. Murein-degrading enzyme that degrades murein glycan strands and insoluble, high-molecular weight murein sacculi, with the concomitant formation of a 1,6-anhydromuramoyl product. Lytic transglycosylases (LTs) play an integral role in the metabolism of the peptidoglycan (PG) sacculus. Their lytic action creates space within the PG sacculus to allow for its expansion as well as for the insertion of various structures such as secretion systems and flagella. This is Membrane-bound lytic murein transglycosylase F from Shigella sonnei (strain Ss046).